Reading from the N-terminus, the 470-residue chain is ESX-4 secretion system ATPase EccB4 (470 aa).

The helical transmembrane segment at 44 to 64 (LALGCVLAIVAAMGCAFVALL) threads the bilayer.

It belongs to the EccB family. In terms of assembly, part of the ESX-4 / type VII secretion system (T7SS), which is composed of cytosolic and membrane components.

It is found in the cell membrane. Functionally, an ATPase. In Mycobacterium tuberculosis (strain CDC 1551 / Oshkosh), this protein is ESX-4 secretion system ATPase EccB4 (eccB4).